The following is a 284-amino-acid chain: UPF0294 protein VV2535 (284 aa).

This sequence belongs to the UPF0294 family.

It is found in the cytoplasm. In Vibrio vulnificus (strain YJ016), this protein is UPF0294 protein VV2535.